A 308-amino-acid chain; its full sequence is UPF0282 protein M164_2122 (308 aa).

This sequence belongs to the UPF0282 family.

The protein is UPF0282 protein M164_2122 of Saccharolobus islandicus (strain M.16.4 / Kamchatka #3) (Sulfolobus islandicus).